Consider the following 353-residue polypeptide: S-adenosylmethionine:tRNA ribosyltransferase-isomerase (353 aa).

This sequence belongs to the QueA family. Monomer.

The protein localises to the cytoplasm. The enzyme catalyses 7-aminomethyl-7-carbaguanosine(34) in tRNA + S-adenosyl-L-methionine = epoxyqueuosine(34) in tRNA + adenine + L-methionine + 2 H(+). Its pathway is tRNA modification; tRNA-queuosine biosynthesis. In terms of biological role, transfers and isomerizes the ribose moiety from AdoMet to the 7-aminomethyl group of 7-deazaguanine (preQ1-tRNA) to give epoxyqueuosine (oQ-tRNA). This is S-adenosylmethionine:tRNA ribosyltransferase-isomerase from Maricaulis maris (strain MCS10) (Caulobacter maris).